Consider the following 659-residue polypeptide: Oligopeptide-binding protein AmiA (659 aa).

The signal sequence occupies residues 1–22 (MKKNRVFATAGLVLLAAGVLAA). A lipid anchor (N-palmitoyl cysteine) is attached at Cys-23. The S-diacylglycerol cysteine moiety is linked to residue Cys-23.

The protein belongs to the bacterial solute-binding protein 5 family.

It is found in the cell membrane. Functionally, part of the binding-protein-dependent transport system for oligopeptides; probably an oligopeptide binding protein. This chain is Oligopeptide-binding protein AmiA (amiA), found in Streptococcus pneumoniae serotype 4 (strain ATCC BAA-334 / TIGR4).